A 534-amino-acid chain; its full sequence is CTP synthase (534 aa).

Positions Met1 to Leu269 are amidoligase domain. A CTP-binding site is contributed by Ser17. Ser17 contacts UTP. Ser18–Val23 is a binding site for ATP. L-glutamine is bound at residue Tyr58. Position 75 (Asp75) interacts with ATP. Residues Asp75 and Glu143 each coordinate Mg(2+). CTP contacts are provided by residues Asp150–Glu152, Lys190–Gln195, and Lys226. Residues Lys190 to Gln195 and Lys226 contribute to the UTP site. The 239-residue stretch at Asp294–Glu532 folds into the Glutamine amidotransferase type-1 domain. Gly352 lines the L-glutamine pocket. Cys379 functions as the Nucleophile; for glutamine hydrolysis in the catalytic mechanism. L-glutamine-binding positions include Leu380–Gln383, Glu403, and Arg460. Residues His505 and Glu507 contribute to the active site.

This sequence belongs to the CTP synthase family. In terms of assembly, homotetramer.

The enzyme catalyses UTP + L-glutamine + ATP + H2O = CTP + L-glutamate + ADP + phosphate + 2 H(+). It carries out the reaction L-glutamine + H2O = L-glutamate + NH4(+). The catalysed reaction is UTP + NH4(+) + ATP = CTP + ADP + phosphate + 2 H(+). The protein operates within pyrimidine metabolism; CTP biosynthesis via de novo pathway; CTP from UDP: step 2/2. Allosterically activated by GTP, when glutamine is the substrate; GTP has no effect on the reaction when ammonia is the substrate. The allosteric effector GTP functions by stabilizing the protein conformation that binds the tetrahedral intermediate(s) formed during glutamine hydrolysis. Inhibited by the product CTP, via allosteric rather than competitive inhibition. Catalyzes the ATP-dependent amination of UTP to CTP with either L-glutamine or ammonia as the source of nitrogen. Regulates intracellular CTP levels through interactions with the four ribonucleotide triphosphates. This is CTP synthase from Hydrogenobaculum sp. (strain Y04AAS1).